We begin with the raw amino-acid sequence, 360 residues long: Mitogen-activated protein kinase 1 (360 aa).

The residue at position 2 (Ala-2) is an N-acetylalanine. The Protein kinase domain occupies 25-313; it reads YTNLSYIGEG…VEQALAHPYL (289 aa). Phosphoserine; by SGK1 is present on Ser-29. ATP contacts are provided by residues 31 to 39 and Lys-54; that span reads IGEGAYGMV. Asp-149 (proton acceptor) is an active-site residue. At Thr-185 the chain carries Phosphothreonine; by MAP2K1 and MAP2K2. Positions 185-187 match the TXY motif; the sequence is TEY. Tyr-187 is subject to Phosphotyrosine; by MAP2K1 and MAP2K2. Phosphothreonine; by autocatalysis is present on Thr-190. Ser-246, Ser-248, and Ser-284 each carry phosphoserine.

The protein belongs to the protein kinase superfamily. CMGC Ser/Thr protein kinase family. MAP kinase subfamily. Binds both upstream activators and downstream substrates in multimolecular complexes. Interacts with ADAM15, ARHGEF2, ARRB2, DAPK1 (via death domain), HSF4, IER3, IPO7, MKNK2, MORG1, NISCH, PEA15, SGK1, and isoform 1 of NEK2. Interacts (via phosphorylated form) with TPR (via C-terminal region and phosphorylated form); the interaction requires dimerization of MAPK1/ERK2 and increases following EGF stimulation. Interacts with MAP2K1. Interacts with DUSP6. Interacts (phosphorylated form) with CAV2 ('Tyr-19'-phosphorylated form); the interaction, promoted by insulin, leads to nuclear location and MAPK1 activation. MKNK2 isoform 1 binding prevents from dephosphorylation and inactivation. Interacts with DCC. The phosphorylated form interacts with PML. Interacts with STYX. Interacts with CDK2AP2. Interacts with CAVIN4. Interacts with DUSP7; the interaction enhances DUSP7 phosphatase activity. Interacts with GIT1; this interaction is necessary for MAPK1 localization to focal adhesions. Interacts with ZNF263. Interacts with phosphoglycerate kinase PGK1; the interaction is direct, occurs under hypoxic conditions, and promotes interaction between PGK1 and PIN1. The cofactor is Mg(2+). In terms of processing, dually phosphorylated on Thr-185 and Tyr-187, which activates the enzyme. Phosphorylated upon FLT3 and KIT signaling. Phosphorylation on Ser-29 by SGK1 results in its activation by enhancing its interaction with MAP2K1/MEK1 and MAP2K2/MEK2. Phosphorylation at Ser-246 and Ser-248 as well as autophosphorylation at Thr-190 promote nuclear localization. Ligand-activated ALK induces tyrosine phosphorylation. Dephosphorylated by PTPRJ at Tyr-187. Dephosphorylated by DUSP1 and DUSP2 at Thr-185 and Tyr-187. Post-translationally, ISGylated. Ubiquitinated by TRIM15 via 'Lys-63'-linked ubiquitination; leading to activation. Deubiquitinated by CYLD.

The protein resides in the nucleus. It is found in the cytoplasm. It localises to the cytoskeleton. The protein localises to the microtubule organizing center. Its subcellular location is the centrosome. The protein resides in the spindle. It is found in the membrane. It localises to the caveola. The protein localises to the cell junction. Its subcellular location is the focal adhesion. The catalysed reaction is L-seryl-[protein] + ATP = O-phospho-L-seryl-[protein] + ADP + H(+). It carries out the reaction L-threonyl-[protein] + ATP = O-phospho-L-threonyl-[protein] + ADP + H(+). Its activity is regulated as follows. Phosphorylated by MAP2K1/MEK1 and MAP2K2/MEK2 on Thr-185 and Tyr-187 in response to external stimuli like insulin or NGF. Both phosphorylations are required for activity. This phosphorylation causes dramatic conformational changes, which enable full activation and interaction of MAPK1/ERK2 with its substrates. Phosphorylation on Ser-29 by SGK1 results in its activation by enhancing its interaction with MAP2K1/MEK1 and MAP2K2/MEK2. Dephosphorylated and inactivated by DUSP1, DUSP3, DUSP6 and DUSP9. Inactivated by pyrimidylpyrrole inhibitors. Its function is as follows. Serine/threonine kinase which acts as an essential component of the MAP kinase signal transduction pathway. MAPK1/ERK2 and MAPK3/ERK1 are the 2 MAPKs which play an important role in the MAPK/ERK cascade. They participate also in a signaling cascade initiated by activated KIT and KITLG/SCF. Depending on the cellular context, the MAPK/ERK cascade mediates diverse biological functions such as cell growth, adhesion, survival and differentiation through the regulation of transcription, translation, cytoskeletal rearrangements. The MAPK/ERK cascade also plays a role in initiation and regulation of meiosis, mitosis, and postmitotic functions in differentiated cells by phosphorylating a number of transcription factors. About 160 substrates have already been discovered for ERKs. Many of these substrates are localized in the nucleus, and seem to participate in the regulation of transcription upon stimulation. However, other substrates are found in the cytosol as well as in other cellular organelles, and those are responsible for processes such as translation, mitosis and apoptosis. Moreover, the MAPK/ERK cascade is also involved in the regulation of the endosomal dynamics, including lysosome processing and endosome cycling through the perinuclear recycling compartment (PNRC); as well as in the fragmentation of the Golgi apparatus during mitosis. The substrates include transcription factors (such as ATF2, BCL6, ELK1, ERF, FOS, HSF4 or SPZ1), cytoskeletal elements (such as CANX, CTTN, GJA1, MAP2, MAPT, PXN, SORBS3 or STMN1), regulators of apoptosis (such as BAD, BTG2, CASP9, DAPK1, IER3, MCL1 or PPARG), regulators of translation (such as EIF4EBP1 and FXR1) and a variety of other signaling-related molecules (like ARHGEF2, DCC, FRS2 or GRB10). Protein kinases (such as RAF1, RPS6KA1/RSK1, RPS6KA3/RSK2, RPS6KA2/RSK3, RPS6KA6/RSK4, SYK, MKNK1/MNK1, MKNK2/MNK2, RPS6KA5/MSK1, RPS6KA4/MSK2, MAPKAPK3 or MAPKAPK5) and phosphatases (such as DUSP1, DUSP4, DUSP6 or DUSP16) are other substrates which enable the propagation the MAPK/ERK signal to additional cytosolic and nuclear targets, thereby extending the specificity of the cascade. Mediates phosphorylation of TPR in response to EGF stimulation. May play a role in the spindle assembly checkpoint. Phosphorylates PML and promotes its interaction with PIN1, leading to PML degradation. Phosphorylates CDK2AP2. Phosphorylates phosphoglycerate kinase PGK1 under hypoxic conditions to promote its targeting to the mitochondrion and suppress the formation of acetyl-coenzyme A from pyruvate. Acts as a transcriptional repressor. Binds to a [GC]AAA[GC] consensus sequence. Repress the expression of interferon gamma-induced genes. Seems to bind to the promoter of CCL5, DMP1, IFIH1, IFITM1, IRF7, IRF9, LAMP3, OAS1, OAS2, OAS3 and STAT1. Transcriptional activity is independent of kinase activity. The polypeptide is Mitogen-activated protein kinase 1 (Bos taurus (Bovine)).